The primary structure comprises 189 residues: MEHKDNSTMYGTTILCIRRGNKVIIAGDGQVSLGHTVIKNSAKKIKRLANDTVITGFAGATADAFTLFERLESKLEKHPGQLLRACVELAKDWRMDRYLRRLEAMMIVADKSVSLIISGNGDVLEPENGIAAIGSGGNYALAAAKALCESNDQFSQNMTLEYIITTAMKIASEICIYTNNNIIMEKIED.

Thr12 is a catalytic residue. 3 residues coordinate Na(+): Ser172, Cys175, and Thr178.

This sequence belongs to the peptidase T1B family. HslV subfamily. As to quaternary structure, a double ring-shaped homohexamer of HslV is capped on each side by a ring-shaped HslU homohexamer. The assembly of the HslU/HslV complex is dependent on binding of ATP.

It localises to the cytoplasm. It carries out the reaction ATP-dependent cleavage of peptide bonds with broad specificity.. Allosterically activated by HslU binding. Its function is as follows. Protease subunit of a proteasome-like degradation complex believed to be a general protein degrading machinery. The protein is ATP-dependent protease subunit HslV of Ehrlichia chaffeensis (strain ATCC CRL-10679 / Arkansas).